An 85-amino-acid polypeptide reads, in one-letter code: Large ribosomal subunit protein bL27 (85 aa).

The disordered stretch occupies residues 1 to 22 (MAHKKGGGSSRNGRDSNAQRRG).

This sequence belongs to the bacterial ribosomal protein bL27 family.

The chain is Large ribosomal subunit protein bL27 from Sorangium cellulosum (strain So ce56) (Polyangium cellulosum (strain So ce56)).